Here is a 367-residue protein sequence, read N- to C-terminus: Protein P39 (367 aa).

Coiled coils occupy residues 165–202 (REGE…SKQQ) and 235–308 (EMIE…SDRL).

Its function is as follows. Might be involved in virion assembly and vector-mediated transmission of the virus. The protein is Protein P39 of Peanut clump virus (isolate 87/TGTA2) (PCV).